We begin with the raw amino-acid sequence, 337 residues long: MQEYKELIKECAKELEGLMPEISQKLVNIAKINSPDRAFLEYLKVVEQVSLMKTERKQKNKALIILWRYGEALEKELYSDVKFFAKPLHKRIFRFVDWKIIGMLFLVFIILPAITSNLWSFRSEHYVLYLNENVDFPRELCNYRTSWLYDFRTSMVCVLKYGYGSINVTLRGNSWEKGVEAQRFISDMEYDFDRVKSPITYIQTPKETLRYKKGVCSDFALLVANILLDNNVSPVYIVHTVVRKEPSGGHAAAGIYVNGTLWILDWGSKPTKFQEYLENIDRIWEIREVRIYRITRDRITLERIYKARLEDDRWRFLYSVIIMLGIFILKRREWWIM.

Residues isoleucine 100–serine 120 traverse the membrane as a helical segment.

Belongs to the UPF0252 family.

Its subcellular location is the membrane. In Pyrococcus horikoshii (strain ATCC 700860 / DSM 12428 / JCM 9974 / NBRC 100139 / OT-3), this protein is UPF0252 protein PH1321.